We begin with the raw amino-acid sequence, 414 residues long: Serine/threonine transporter SstT (414 aa).

The next 8 helical transmembrane spans lie at 22–42, 54–74, 89–109, 148–168, 189–209, 223–243, 305–325, and 337–357; these read GLVL…TIGF, IFVK…VMAA, IIVL…IAGF, AIFK…GLAL, IVHV…AETL, LLAV…PILV, MAGA…TLGL, and IVAA…LLLI.

This sequence belongs to the dicarboxylate/amino acid:cation symporter (DAACS) (TC 2.A.23) family.

The protein resides in the cell inner membrane. It catalyses the reaction L-serine(in) + Na(+)(in) = L-serine(out) + Na(+)(out). The catalysed reaction is L-threonine(in) + Na(+)(in) = L-threonine(out) + Na(+)(out). Involved in the import of serine and threonine into the cell, with the concomitant import of sodium (symport system). This Haemophilus influenzae (strain 86-028NP) protein is Serine/threonine transporter SstT.